The sequence spans 583 residues: Sensor protein SrrB (583 aa).

Topologically, residues 1 to 11 (MMSRLNSVVIK) are cytoplasmic. Residues 12–32 (LWLTIILIVTTVLILLSIALI) form a helical membrane-spanning segment. The Extracellular segment spans residues 33–174 (TFMQYYFTQE…SIEDTNNAIT (142 aa)). A helical transmembrane segment spans residues 175–195 (IITIITAVIFLTITTVFAFFL). The Cytoplasmic portion of the chain corresponds to 196 to 583 (SSRITKPLRR…TFIIKLPKPE (388 aa)). Residues 197–249 (SRITKPLRRLRDQATRVSEGDYSYKPSVTTKDEIGQLSQAFNQMSTEIEEHVD) enclose the HAMP domain. The region spanning 366-583 (NVSHELRTPI…TFIIKLPKPE (218 aa)) is the Histidine kinase domain. H369 is subject to Phosphohistidine; by autocatalysis.

The protein localises to the cell membrane. The catalysed reaction is ATP + protein L-histidine = ADP + protein N-phospho-L-histidine.. Member of the two-component regulatory system SrrA/SrrB, which is involved in the global regulation of staphylococcal virulence factors in response to environmental oxygen levels as well as biofilm formation. Also plays an essential role in host-derived nitric oxide resistance by regulating hmp/flavohemoglobin, an enzyme that detoxifies nitric oxide by converting it to nitrate. Functions as a sensor protein kinase which is autophosphorylated at a histidine residue and transfers its phosphate group to SrrA. In turn, SrrA binds to the upstream promoter regions of the target genes to positively and negatively regulate their expression. This is Sensor protein SrrB (srrB) from Staphylococcus aureus (strain MW2).